Consider the following 61-residue polypeptide: Large ribosomal subunit protein eL29 (61 aa).

Over residues 1–26 (MAKSKNHTNHNQNKKAHRNGIKRPQK) the composition is skewed to basic residues. The tract at residues 1–32 (MAKSKNHTNHNQNKKAHRNGIKRPQKHRYDSL) is disordered.

It belongs to the eukaryotic ribosomal protein eL29 family. As to quaternary structure, component of the large ribosomal subunit (LSU). Mature yeast ribosomes consist of a small (40S) and a large (60S) subunit. The 40S small subunit contains 1 molecule of ribosomal RNA (18S rRNA) and at least 33 different proteins. The large 60S subunit contains 3 rRNA molecules (25S, 5.8S and 5S rRNA) and at least 46 different proteins.

It localises to the cytoplasm. Its subcellular location is the nucleus. The protein resides in the nucleolus. In terms of biological role, component of the ribosome, a large ribonucleoprotein complex responsible for the synthesis of proteins in the cell. The small ribosomal subunit (SSU) binds messenger RNAs (mRNAs) and translates the encoded message by selecting cognate aminoacyl-transfer RNA (tRNA) molecules. The large subunit (LSU) contains the ribosomal catalytic site termed the peptidyl transferase center (PTC), which catalyzes the formation of peptide bonds, thereby polymerizing the amino acids delivered by tRNAs into a polypeptide chain. The nascent polypeptides leave the ribosome through a tunnel in the LSU and interact with protein factors that function in enzymatic processing, targeting, and the membrane insertion of nascent chains at the exit of the ribosomal tunnel. In Schizosaccharomyces pombe (strain 972 / ATCC 24843) (Fission yeast), this protein is Large ribosomal subunit protein eL29 (rpl29).